The sequence spans 353 residues: Deoxyribonuclease-2-alpha (353 aa).

Positions 1-19 (MATLRSLLLAALLWVPAEA) are cleaved as a signal peptide. An intrachain disulfide couples Cys-22 to Cys-161. Asn-71, Asn-88, Asn-214, and Asn-268 each carry an N-linked (GlcNAc...) asparagine glycan. 2 disulfide bridges follow: Cys-269-Cys-349 and Cys-310-Cys-329. His-297 is a catalytic residue.

It belongs to the DNase II family. Highly expressed in fetal liver macrophages.

The protein resides in the lysosome. The enzyme catalyses Endonucleolytic cleavage to nucleoside 3'-phosphates and 3'-phosphooligonucleotide end-products.. Its function is as follows. Hydrolyzes DNA under acidic conditions with a preference for double-stranded DNA. Plays a major role in the clearance of nucleic acids generated through apoptosis, hence preventing autoinflammation. Necessary for proper fetal development and for definitive erythropoiesis in fetal liver and bone marrow, where it degrades nuclear DNA expelled from erythroid precursor cells. In Mus musculus (Mouse), this protein is Deoxyribonuclease-2-alpha (Dnase2).